The primary structure comprises 467 residues: MTCRTRFAPSPTGYLHIGGARTALYCWLEARHRGGQFVLRIEDTDRERSTQVAIDAILEAMEWLGLGYDEGPIYQTQRIARYQEVAEQLLAQGKAYYAYETREELDAMREAAMAKQEKPRYNGAAREQQLPYRDDPNRVIRFKNPLAGTVVFDDLIKGRIEIANSELDDMVIFRPDGYPTYNFAVVVDDWDMGITEVIRGDDHINNTPRQINIYEALGAPVPKFAHMPMILDEQGAKLSKRTGAADVMQYKDAGYLPHALINYLARLGWSHGDQELFSQQELLDLFDVKDVNSKAARLDMAKLGWVNQHYLKTDDPASIAPQLEYQLRKLGIDVAAGPAAADVVVALRERVQTLKEMAEKAVVWYQPLETYDEAAVIKHLKLGAEVPLGKAREMLAALNEWSVENVSAALHAAAAALELGMGKVAQPLRVAITGTQVSPDISQTVYLAGREGALKRIDAALIKIGAA.

The 'HIGH' region motif lies at 9-19 (PSPTGYLHIGG). Positions 237-241 (KLSKR) match the 'KMSKS' region motif. Residue K240 coordinates ATP.

Belongs to the class-I aminoacyl-tRNA synthetase family. Glutamate--tRNA ligase type 1 subfamily. As to quaternary structure, monomer.

The protein localises to the cytoplasm. It carries out the reaction tRNA(Glu) + L-glutamate + ATP = L-glutamyl-tRNA(Glu) + AMP + diphosphate. Functionally, catalyzes the attachment of glutamate to tRNA(Glu) in a two-step reaction: glutamate is first activated by ATP to form Glu-AMP and then transferred to the acceptor end of tRNA(Glu). The sequence is that of Glutamate--tRNA ligase from Xanthomonas campestris pv. campestris (strain 8004).